A 642-amino-acid polypeptide reads, in one-letter code: Nucleolar GTP-binding protein 1 (642 aa).

Residues 168–340 form the OBG-type G domain; that stretch reads RTLLICGYPN…VRNKACEKLL (173 aa). GTP contacts are provided by residues 174-181, 220-224, and 288-291; these read GYPNVGKS, DTPGI, and NKTD. Positions 585-642 are disordered; that stretch reads MDGVADASMRSKADRMAKLHRRERNRQARQGEADRHATASLPKHLFSGKRGIGSNDRR. Over residues 609–621 the composition is skewed to basic and acidic residues; it reads NRQARQGEADRHA.

It belongs to the TRAFAC class OBG-HflX-like GTPase superfamily. OBG GTPase family. NOG subfamily.

Its subcellular location is the nucleus. The protein resides in the nucleolus. Its function is as follows. Involved in the biogenesis of the 60S ribosomal subunit. The polypeptide is Nucleolar GTP-binding protein 1 (NOG1) (Eremothecium gossypii (strain ATCC 10895 / CBS 109.51 / FGSC 9923 / NRRL Y-1056) (Yeast)).